Consider the following 288-residue polypeptide: Phosphatidylserine decarboxylase proenzyme (288 aa).

Catalysis depends on charge relay system; for autoendoproteolytic cleavage activity residues aspartate 90, histidine 147, and serine 252. Serine 252 functions as the Schiff-base intermediate with substrate; via pyruvic acid; for decarboxylase activity in the catalytic mechanism. Serine 252 bears the Pyruvic acid (Ser); by autocatalysis mark.

It belongs to the phosphatidylserine decarboxylase family. PSD-B subfamily. Prokaryotic type I sub-subfamily. As to quaternary structure, heterodimer of a large membrane-associated beta subunit and a small pyruvoyl-containing alpha subunit. Requires pyruvate as cofactor. In terms of processing, is synthesized initially as an inactive proenzyme. Formation of the active enzyme involves a self-maturation process in which the active site pyruvoyl group is generated from an internal serine residue via an autocatalytic post-translational modification. Two non-identical subunits are generated from the proenzyme in this reaction, and the pyruvate is formed at the N-terminus of the alpha chain, which is derived from the carboxyl end of the proenzyme. The autoendoproteolytic cleavage occurs by a canonical serine protease mechanism, in which the side chain hydroxyl group of the serine supplies its oxygen atom to form the C-terminus of the beta chain, while the remainder of the serine residue undergoes an oxidative deamination to produce ammonia and the pyruvoyl prosthetic group on the alpha chain. During this reaction, the Ser that is part of the protease active site of the proenzyme becomes the pyruvoyl prosthetic group, which constitutes an essential element of the active site of the mature decarboxylase.

It localises to the cell membrane. It carries out the reaction a 1,2-diacyl-sn-glycero-3-phospho-L-serine + H(+) = a 1,2-diacyl-sn-glycero-3-phosphoethanolamine + CO2. Its pathway is phospholipid metabolism; phosphatidylethanolamine biosynthesis; phosphatidylethanolamine from CDP-diacylglycerol: step 2/2. Functionally, catalyzes the formation of phosphatidylethanolamine (PtdEtn) from phosphatidylserine (PtdSer). The polypeptide is Phosphatidylserine decarboxylase proenzyme (Pseudomonas fluorescens (strain ATCC BAA-477 / NRRL B-23932 / Pf-5)).